The primary structure comprises 236 residues: Small ribosomal subunit protein uS2c (236 aa).

It belongs to the universal ribosomal protein uS2 family.

It is found in the plastid. Its subcellular location is the chloroplast. The protein is Small ribosomal subunit protein uS2c (rps2) of Nandina domestica (Heavenly bamboo).